A 248-amino-acid polypeptide reads, in one-letter code: UPF0173 metal-dependent hydrolase Hlac_1347 (248 aa).

It belongs to the UPF0173 family.

The sequence is that of UPF0173 metal-dependent hydrolase Hlac_1347 from Halorubrum lacusprofundi (strain ATCC 49239 / DSM 5036 / JCM 8891 / ACAM 34).